A 132-amino-acid chain; its full sequence is uncharacterized protein (132 aa).

Residues 17–75 (RSAVPRWPHLSSQSGVEPPDRWTGTPGWPSRDQEAPGSMMPPAAAQPSAHGALVPPATA) are disordered. Over residues 51-65 (APGSMMPPAAAQPSA) the composition is skewed to low complexity.

Expressed exclusively in heart.

It is found in the cytoplasm. This is an uncharacterized protein from Homo sapiens (Human).